The sequence spans 355 residues: Methylthioribose-1-phosphate isomerase (355 aa).

Residues 50–52 (RGA), arginine 93, and glutamine 198 contribute to the substrate site. Aspartate 239 (proton donor) is an active-site residue. Residue 249-250 (NK) coordinates substrate.

Belongs to the eIF-2B alpha/beta/delta subunits family. MtnA subfamily. Homodimer.

It carries out the reaction 5-(methylsulfanyl)-alpha-D-ribose 1-phosphate = 5-(methylsulfanyl)-D-ribulose 1-phosphate. Its pathway is amino-acid biosynthesis; L-methionine biosynthesis via salvage pathway; L-methionine from S-methyl-5-thio-alpha-D-ribose 1-phosphate: step 1/6. Catalyzes the interconversion of methylthioribose-1-phosphate (MTR-1-P) into methylthioribulose-1-phosphate (MTRu-1-P). This is Methylthioribose-1-phosphate isomerase from Geobacillus thermodenitrificans (strain NG80-2).